A 98-amino-acid polypeptide reads, in one-letter code: Molybdopterin synthase sulfur carrier subunit (98 aa).

A 1-thioglycine; alternate modification is found at Gly-98. The residue at position 98 (Gly-98) is a Glycyl adenylate; alternate.

The protein belongs to the MoaD family. MOCS2A subfamily. In terms of assembly, heterotetramer; composed of 2 small (MOCS2A) and 2 large (MOCS2B) subunits. C-terminal thiocarboxylation occurs in 2 steps, it is first acyl-adenylated (-COAMP) via the hesA/moeB/thiF part of MOCS3, then thiocarboxylated (-COSH) via the rhodanese domain of MOCS3.

It is found in the cytoplasm. It participates in cofactor biosynthesis; molybdopterin biosynthesis. Its function is as follows. Acts as a sulfur carrier required for molybdopterin biosynthesis. Component of the molybdopterin synthase complex that catalyzes the conversion of precursor Z into molybdopterin by mediating the incorporation of 2 sulfur atoms into precursor Z to generate a dithiolene group. In the complex, serves as sulfur donor by being thiocarboxylated (-COSH) at its C-terminus by MOCS3. After interaction with MOCS2B, the sulfur is then transferred to precursor Z to form molybdopterin. This is Molybdopterin synthase sulfur carrier subunit from Aedes aegypti (Yellowfever mosquito).